A 480-amino-acid chain; its full sequence is Aromatic-L-amino-acid decarboxylase (480 aa).

Position 292 is an N6-(pyridoxal phosphate)lysine (Lys-292).

Belongs to the group II decarboxylase family. Pyridoxal 5'-phosphate is required as a cofactor.

It carries out the reaction L-tryptophan + H(+) = tryptamine + CO2. The catalysed reaction is L-phenylalanine + H(+) = 2-phenylethylamine + CO2. It catalyses the reaction 5-hydroxy-L-tryptophan + H(+) = serotonin + CO2. The enzyme catalyses L-dopa + H(+) = dopamine + CO2. In terms of biological role, involved in bacillamide C biosynthesis. Catalyzes the decarboxylation of L-tryptophan to tryptamine. The tryptamine obtained is then probably incorporated into the bacillamide C peptide, which is derived from the amino acids alanine, cysteine and tryptophan through nonribosomal peptide synthetase (NRPS) biosynthesis strategy. L-tryptophan is the best substrate, but the enzyme displays broad substrate specificity for various aromatic amino acids in vitro and it can also catalyze the decarboxylation of L-phenylalanine, 5-hydroxy-L-tryptophan (L-HTP) and L-DOPA, with lower efficiency. Exhibits weak activity with L-tyrosine. This Bacillus atrophaeus protein is Aromatic-L-amino-acid decarboxylase.